The primary structure comprises 499 residues: Salviol synthase (499 aa).

Residues 4–24 (HIPSLVLCISFFIFFKIVSKL) form a helical membrane-spanning segment. Heme is bound at residue Cys436.

This sequence belongs to the cytochrome P450 family. Requires heme as cofactor. Expressed in leaf glandular trichomes.

It localises to the membrane. The enzyme catalyses ferruginol + reduced [NADPH--hemoprotein reductase] + O2 = salviol + oxidized [NADPH--hemoprotein reductase] + H2O + H(+). The protein operates within secondary metabolite biosynthesis; terpenoid biosynthesis. Functionally, monooxygenase involved in the biosynthesis of labdane-related diterpenes natural products. Catalyzes the oxidation of ferruginol to produce salviol. Salviol is an intermediate in the biosynthesis of carnosate, a potent antioxidant. This chain is Salviol synthase, found in Salvia pomifera (Apple sage).